The sequence spans 301 residues: 33 kDa chaperonin (301 aa).

2 cysteine pairs are disulfide-bonded: Cys-244-Cys-246 and Cys-277-Cys-280.

The protein belongs to the HSP33 family. In terms of processing, under oxidizing conditions two disulfide bonds are formed involving the reactive cysteines. Under reducing conditions zinc is bound to the reactive cysteines and the protein is inactive.

The protein resides in the cytoplasm. Its function is as follows. Redox regulated molecular chaperone. Protects both thermally unfolding and oxidatively damaged proteins from irreversible aggregation. Plays an important role in the bacterial defense system toward oxidative stress. The sequence is that of 33 kDa chaperonin from Geobacter sulfurreducens (strain ATCC 51573 / DSM 12127 / PCA).